The sequence spans 474 residues: Light-independent protochlorophyllide reductase subunit N (474 aa).

3 residues coordinate [4Fe-4S] cluster: cysteine 22, cysteine 47, and cysteine 107.

Belongs to the BchN/ChlN family. In terms of assembly, protochlorophyllide reductase is composed of three subunits; ChlL, ChlN and ChlB. Forms a heterotetramer of two ChlB and two ChlN subunits. Requires [4Fe-4S] cluster as cofactor.

The protein resides in the plastid. It localises to the chloroplast. The enzyme catalyses chlorophyllide a + oxidized 2[4Fe-4S]-[ferredoxin] + 2 ADP + 2 phosphate = protochlorophyllide a + reduced 2[4Fe-4S]-[ferredoxin] + 2 ATP + 2 H2O. It participates in porphyrin-containing compound metabolism; chlorophyll biosynthesis (light-independent). Its function is as follows. Component of the dark-operative protochlorophyllide reductase (DPOR) that uses Mg-ATP and reduced ferredoxin to reduce ring D of protochlorophyllide (Pchlide) to form chlorophyllide a (Chlide). This reaction is light-independent. The NB-protein (ChlN-ChlB) is the catalytic component of the complex. In Physcomitrium patens (Spreading-leaved earth moss), this protein is Light-independent protochlorophyllide reductase subunit N.